Reading from the N-terminus, the 652-residue chain is DNA mismatch repair protein MutL (652 aa).

Belongs to the DNA mismatch repair MutL/HexB family.

In terms of biological role, this protein is involved in the repair of mismatches in DNA. It is required for dam-dependent methyl-directed DNA mismatch repair. May act as a 'molecular matchmaker', a protein that promotes the formation of a stable complex between two or more DNA-binding proteins in an ATP-dependent manner without itself being part of a final effector complex. The chain is DNA mismatch repair protein MutL from Aliivibrio salmonicida (strain LFI1238) (Vibrio salmonicida (strain LFI1238)).